The primary structure comprises 115 residues: Large ribosomal subunit protein bL19 (115 aa).

It belongs to the bacterial ribosomal protein bL19 family.

In terms of biological role, this protein is located at the 30S-50S ribosomal subunit interface and may play a role in the structure and function of the aminoacyl-tRNA binding site. This Syntrophotalea carbinolica (strain DSM 2380 / NBRC 103641 / GraBd1) (Pelobacter carbinolicus) protein is Large ribosomal subunit protein bL19.